Here is a 591-residue protein sequence, read N- to C-terminus: DNA ligase (591 aa).

NAD(+)-binding positions include 38 to 42 (DEKYD), 87 to 88 (SL), and Glu-119. Lys-121 acts as the N6-AMP-lysine intermediate in catalysis. NAD(+) contacts are provided by Arg-142, Glu-181, Lys-298, and Lys-322. The Zn(2+) site is built by Cys-415, Cys-418, Cys-433, and Cys-439.

This sequence belongs to the NAD-dependent DNA ligase family. LigA subfamily. The cofactor is Mg(2+). Mn(2+) serves as cofactor.

It carries out the reaction NAD(+) + (deoxyribonucleotide)n-3'-hydroxyl + 5'-phospho-(deoxyribonucleotide)m = (deoxyribonucleotide)n+m + AMP + beta-nicotinamide D-nucleotide.. Functionally, DNA ligase that catalyzes the formation of phosphodiester linkages between 5'-phosphoryl and 3'-hydroxyl groups in double-stranded DNA using NAD as a coenzyme and as the energy source for the reaction. It is essential for DNA replication and repair of damaged DNA. This Wigglesworthia glossinidia brevipalpis protein is DNA ligase.